A 71-amino-acid polypeptide reads, in one-letter code: Alpha-cobratoxin (71 aa).

5 cysteine pairs are disulfide-bonded: Cys3–Cys20, Cys14–Cys41, Cys26–Cys30, Cys45–Cys56, and Cys57–Cys62.

This sequence belongs to the three-finger toxin family. Long-chain subfamily. Type II alpha-neurotoxin sub-subfamily. In terms of assembly, monomer, homo- or heterodimer with cytotoxins 1 (P60305), 2 (AC P01445), and 3 (AC P01446); disulfide-linked. In terms of processing, in homodimer alpha-cobratoxin, selective reduction of Cys(26)-Cys(30) in one subunit does not affect the activity against the alpha-7/CHRNA7 nAChR, whereas its reduction in both subunits almost prevents alpha-7/CHRNA7 nAChR recognition. On the contrary, reduction of one or both Cys(26)-Cys(30) disulfide bonds in the homodimer considerably potentiates inhibition of the alpha-3-beta-2/CHRNA3-CHRNB2 nAChR by the toxin. As to expression, expressed by the venom gland.

The protein localises to the secreted. Monomer: binds with high affinity to muscular (alpha-1-beta-1-gamma-delta/CHRNA1-CHRNB1-CHRNG-CHRND) nAChR (tested on Torpedo californica, Kd=0.2-4.5 nM) and neuronal alpha-7/CHRNA7 nicotinic acetylcholine receptors (Kd=13-105 nM). Also inhibits GABA(A) channels. Heteropentamer targets studied are composed of alpha-1-beta-3-gamma-2 (GABRA1-GABRB3-GABRG2) subunits (IC(50)=236 nM), alpha-1-beta-2-gamma-2 (GABRA1-GABRB2-GABRG2) subunits (IC(50)=469 nM), alpha-2-beta-2-gamma-2 (GABRA2-GABRB2-GABRG2) subunits (IC(50)=485 nM), alpha-5-beta-3-gamma-2 (GABRA5-GABRB3-GABRG2) subunits (IC(50)=635 nM), and alpha-2-beta-3-gamma-2 (GABRA2-GABRB3-GABRG2) subunits (IC(50)=1099 nM) (activated by 10 uM GABA). Its function is as follows. Homodimer: binds with high affinity (but lower than the monomeric form) to muscular (IC(50)=9.7 nM) and with low affinity to neuronal alpha-7/CHRNA7 nAChRs (IC(50)=1370 nM). However, it acquires (compared to the monomeric form) the capacity to block alpha-3/beta-2 (CHRNA3/CHRNB2) nAChRs. Functionally, heterodimer with cytotoxin 3 (AC P01446): is slightly more active than the homodimer in inhibiting alpha-7/CHRNA7 nAChR and is considerably more active in blocking the alpha-3-beta-2/CHRNA3-CHRNB2 nAChR. This Naja kaouthia (Monocled cobra) protein is Alpha-cobratoxin.